Reading from the N-terminus, the 496-residue chain is Probable cytosol aminopeptidase (496 aa).

Mn(2+)-binding residues include K262 and D267. The active site involves K274. 3 residues coordinate Mn(2+): D285, D344, and E346. R348 is a catalytic residue.

This sequence belongs to the peptidase M17 family. The cofactor is Mn(2+).

Its subcellular location is the cytoplasm. The enzyme catalyses Release of an N-terminal amino acid, Xaa-|-Yaa-, in which Xaa is preferably Leu, but may be other amino acids including Pro although not Arg or Lys, and Yaa may be Pro. Amino acid amides and methyl esters are also readily hydrolyzed, but rates on arylamides are exceedingly low.. The catalysed reaction is Release of an N-terminal amino acid, preferentially leucine, but not glutamic or aspartic acids.. Its function is as follows. Presumably involved in the processing and regular turnover of intracellular proteins. Catalyzes the removal of unsubstituted N-terminal amino acids from various peptides. The protein is Probable cytosol aminopeptidase of Rhizobium johnstonii (strain DSM 114642 / LMG 32736 / 3841) (Rhizobium leguminosarum bv. viciae).